Reading from the N-terminus, the 265-residue chain is 3-deoxy-manno-octulosonate cytidylyltransferase 2 (265 aa).

Belongs to the KdsB family.

It localises to the cytoplasm. The catalysed reaction is 3-deoxy-alpha-D-manno-oct-2-ulosonate + CTP = CMP-3-deoxy-beta-D-manno-octulosonate + diphosphate. The protein operates within nucleotide-sugar biosynthesis; CMP-3-deoxy-D-manno-octulosonate biosynthesis; CMP-3-deoxy-D-manno-octulosonate from 3-deoxy-D-manno-octulosonate and CTP: step 1/1. Its pathway is bacterial outer membrane biogenesis; lipopolysaccharide biosynthesis. Its function is as follows. Activates KDO (a required 8-carbon sugar) for incorporation into bacterial lipopolysaccharide in Gram-negative bacteria. The protein is 3-deoxy-manno-octulosonate cytidylyltransferase 2 of Burkholderia lata (strain ATCC 17760 / DSM 23089 / LMG 22485 / NCIMB 9086 / R18194 / 383).